Reading from the N-terminus, the 113-residue chain is Early nodulin-12B (113 aa).

Residues 1–24 (MASFSLSILVFFISALVLVPQGFA) form the signal peptide. The disordered stretch occupies residues 29-113 (NPAYRPPQTK…HPPAEDNIHF (85 aa)). The segment covering 32-42 (YRPPQTKPPVN) has biased composition (pro residues). Tandem repeats lie at residues 34–38 (PPQTK) and 39–43 (PPVNK). The tract at residues 34–109 (PPQTKPPVNK…PTHKHPPAED (76 aa)) is 15 X 5 AA approximate tandem repeats of P-P-[QVHRTA]-[NHKE]-[KEDT]. The stretch at 44–48 (PSHKE) is one 3; approximate repeat. Composition is skewed to basic and acidic residues over residues 45 to 60 (SHKEPPVHKPPHKEPP) and 67 to 113 (KEPP…NIHF). 3 tandem repeats follow at residues 49–53 (PPVHK), 54–58 (PPHKE), and 59–63 (PPVNK). The stretch at 64-68 (PRHKE) is one 7; approximate repeat. A run of 4 repeats spans residues 69 to 73 (PPVHK), 74 to 78 (PPHKD), 79 to 83 (PPVNK), and 84 to 88 (PPQKE). A 12; approximate repeat occupies 89–93 (SPVHK). A run of 3 repeats spans residues 94-98 (PPRKE), 99-103 (PPTHK), and 105-109 (PPAED).

This sequence belongs to the plant proline-rich protein superfamily. ENOD12 family. In terms of tissue distribution, expressed only in young nodules.

The protein resides in the secreted. It localises to the cell wall. Functionally, involved in the infection process during the plant-rhizobium interaction. The protein is Early nodulin-12B (ENOD12B) of Medicago sativa (Alfalfa).